Here is a 255-residue protein sequence, read N- to C-terminus: Ribonuclease PH (255 aa).

Phosphate is bound by residues Arg-86 and 124-126 (GTR).

This sequence belongs to the RNase PH family. As to quaternary structure, homohexameric ring arranged as a trimer of dimers.

The enzyme catalyses tRNA(n+1) + phosphate = tRNA(n) + a ribonucleoside 5'-diphosphate. Functionally, phosphorolytic 3'-5' exoribonuclease that plays an important role in tRNA 3'-end maturation. Removes nucleotide residues following the 3'-CCA terminus of tRNAs; can also add nucleotides to the ends of RNA molecules by using nucleoside diphosphates as substrates, but this may not be physiologically important. Probably plays a role in initiation of 16S rRNA degradation (leading to ribosome degradation) during starvation. The protein is Ribonuclease PH of Geobacillus thermodenitrificans (strain NG80-2).